A 305-amino-acid chain; its full sequence is MLKQRTLKTVIRASGVGLHGGVKVNMTLRPAAPDTGIVFRRVDLPEPVDIPAKAFMVGDTRMCSCLEKDGVKVGTIEHLMSALAGLGIDNVWVDLDAPEVPILDGSAAPFVFLIQSAGIEEQNAAKKFIRVTKTIEVRDGDKWARFEPYDGYRLAFSIVFNHPAIDKSAQKAEIDFAEQSYVREVARARTFGFMQEVEYLRENGLALGGGLENAIVLDEFRVLNQDGLRYGDEFVKHKILDAIGDLYLLGHPLLAAYSSHKGGHALNNQLARALLEQQSSWEIATFEQAEHAPSGVTRWLAQAAA.

Residues histidine 78, histidine 237, and aspartate 241 each contribute to the Zn(2+) site. The active-site Proton donor is the histidine 264.

It belongs to the LpxC family. It depends on Zn(2+) as a cofactor.

The enzyme catalyses a UDP-3-O-[(3R)-3-hydroxyacyl]-N-acetyl-alpha-D-glucosamine + H2O = a UDP-3-O-[(3R)-3-hydroxyacyl]-alpha-D-glucosamine + acetate. It participates in glycolipid biosynthesis; lipid IV(A) biosynthesis; lipid IV(A) from (3R)-3-hydroxytetradecanoyl-[acyl-carrier-protein] and UDP-N-acetyl-alpha-D-glucosamine: step 2/6. Catalyzes the hydrolysis of UDP-3-O-myristoyl-N-acetylglucosamine to form UDP-3-O-myristoylglucosamine and acetate, the committed step in lipid A biosynthesis. This is UDP-3-O-acyl-N-acetylglucosamine deacetylase from Dechloromonas aromatica (strain RCB).